A 271-amino-acid polypeptide reads, in one-letter code: MSTIAASAKIHPTAVVEDGAVIGENVVIGALAYVGPKVTLHDDVRLHNHAVVSGLTVIGRGSVVHPMAVIGGTPQAVRHDGSETTLEIGERCIMREGVTMNAGSSDGGGKTIVGDDNLFLANSHVAHDCRLGRHIILSNNVMLAGHVTIEDRAILGGGCAVHQFTRIGRQAFIGGLSAVNYDVIPYGMLNGNPGILGGLNVVGMTRSGIERADIHKVRRVYKAIFEAEGTIRGNAAAIDRNDYLDCPQALEIIDFIGAGSDRAISSPNRGK.

Belongs to the transferase hexapeptide repeat family. LpxA subfamily. As to quaternary structure, homotrimer.

Its subcellular location is the cytoplasm. The enzyme catalyses a (3R)-hydroxyacyl-[ACP] + UDP-N-acetyl-alpha-D-glucosamine = a UDP-3-O-[(3R)-3-hydroxyacyl]-N-acetyl-alpha-D-glucosamine + holo-[ACP]. The protein operates within glycolipid biosynthesis; lipid IV(A) biosynthesis; lipid IV(A) from (3R)-3-hydroxytetradecanoyl-[acyl-carrier-protein] and UDP-N-acetyl-alpha-D-glucosamine: step 1/6. In terms of biological role, involved in the biosynthesis of lipid A, a phosphorylated glycolipid that anchors the lipopolysaccharide to the outer membrane of the cell. This chain is Acyl-[acyl-carrier-protein]--UDP-N-acetylglucosamine O-acyltransferase, found in Agrobacterium fabrum (strain C58 / ATCC 33970) (Agrobacterium tumefaciens (strain C58)).